A 216-amino-acid chain; its full sequence is Protein Syd (216 aa).

Belongs to the Syd family.

Its subcellular location is the cell inner membrane. Interacts with the SecY protein in vivo. May bind preferentially to an uncomplexed state of SecY, thus functioning either as a chelating agent for excess SecY in the cell or as a regulatory factor that negatively controls the translocase function. This Shewanella baltica (strain OS155 / ATCC BAA-1091) protein is Protein Syd.